Here is a 588-residue protein sequence, read N- to C-terminus: Adenine deaminase (588 aa).

The protein belongs to the metallo-dependent hydrolases superfamily. Adenine deaminase family. Homodimer. It depends on Mn(2+) as a cofactor.

It catalyses the reaction adenine + H2O + H(+) = hypoxanthine + NH4(+). In Escherichia coli O139:H28 (strain E24377A / ETEC), this protein is Adenine deaminase.